The sequence spans 444 residues: Cortexillin-1 (444 aa).

The interval 1–227 (MAGKDWEIVQ…VLYTSLFFHA (227 aa)) is actin-binding. Calponin-homology (CH) domains are found at residues 8–115 (IVQE…RKYR) and 124–229 (KSSE…HAYR). Coiled-coil stretches lie at residues 227 to 352 (AYRA…TRIR) and 410 to 434 (LATK…DLKA).

The protein belongs to the cortexillin family. As to quaternary structure, homodimer; parallel.

The protein resides in the cytoplasm. It localises to the cytoskeleton. Functionally, actin-bundling protein. When linked to F-actin the actin filaments form preferentially anti-parallel bundles that associate into meshworks. Plays a major role in cytokinesis. Negatively regulates cortical localization of rapgap1. The polypeptide is Cortexillin-1 (ctxA) (Dictyostelium discoideum (Social amoeba)).